The following is a 197-amino-acid chain: Nucleoid occlusion factor SlmA (197 aa).

The region spanning 7-67 (INRREHILQC…GLIEFIEESL (61 aa)) is the HTH tetR-type domain. A DNA-binding region (H-T-H motif) is located at residues 30–49 (TTAKLAAEVGVSEAALYRHF). The stretch at 109–136 (DALLGENERLRSRISQLFAKIETHLKQI) forms a coiled coil.

This sequence belongs to the nucleoid occlusion factor SlmA family. As to quaternary structure, homodimer. Interacts with FtsZ.

It is found in the cytoplasm. The protein localises to the nucleoid. In terms of biological role, required for nucleoid occlusion (NO) phenomenon, which prevents Z-ring formation and cell division over the nucleoid. Acts as a DNA-associated cell division inhibitor that binds simultaneously chromosomal DNA and FtsZ, and disrupts the assembly of FtsZ polymers. SlmA-DNA-binding sequences (SBS) are dispersed on non-Ter regions of the chromosome, preventing FtsZ polymerization at these regions. The chain is Nucleoid occlusion factor SlmA from Shewanella halifaxensis (strain HAW-EB4).